The primary structure comprises 166 residues: Small ribosomal subunit protein uS5 (166 aa).

The S5 DRBM domain occupies 12–75; it reads YIEKLVQVNR…EAARRNMIQV (64 aa).

Belongs to the universal ribosomal protein uS5 family. Part of the 30S ribosomal subunit. Contacts proteins S4 and S8.

In terms of biological role, with S4 and S12 plays an important role in translational accuracy. Located at the back of the 30S subunit body where it stabilizes the conformation of the head with respect to the body. This Azotobacter vinelandii (strain DJ / ATCC BAA-1303) protein is Small ribosomal subunit protein uS5.